Here is a 206-residue protein sequence, read N- to C-terminus: Small ribosomal subunit protein uS4 (206 aa).

Positions 23–47 (AKSPLNRREYGPGQHGQRRKGKLSD) are disordered. An S4 RNA-binding domain is found at 94-157 (RRLDAVIYRA…RQLAIVLESV (64 aa)).

The protein belongs to the universal ribosomal protein uS4 family. Part of the 30S ribosomal subunit. Contacts protein S5. The interaction surface between S4 and S5 is involved in control of translational fidelity.

One of the primary rRNA binding proteins, it binds directly to 16S rRNA where it nucleates assembly of the body of the 30S subunit. Its function is as follows. With S5 and S12 plays an important role in translational accuracy. In Paracoccus denitrificans (strain Pd 1222), this protein is Small ribosomal subunit protein uS4.